A 355-amino-acid chain; its full sequence is Probable GTP 3',8-cyclase (355 aa).

The region spanning 5 to 233 (AYGRPLKDLR…GRLHNRRVYR (229 aa)) is the Radical SAM core domain. Residue R14 participates in GTP binding. [4Fe-4S] cluster-binding residues include C21, C25, and C28. K69 contacts GTP. Position 73 (G73) interacts with S-adenosyl-L-methionine. T97 is a binding site for GTP. Residue S121 coordinates S-adenosyl-L-methionine. K157 contributes to the GTP binding site. Residues C252 and C255 each contribute to the [4Fe-4S] cluster site. GTP is bound at residue 257–259 (RVR). C269 is a [4Fe-4S] cluster binding site.

It belongs to the radical SAM superfamily. MoaA family. [4Fe-4S] cluster serves as cofactor.

The catalysed reaction is GTP + AH2 + S-adenosyl-L-methionine = (8S)-3',8-cyclo-7,8-dihydroguanosine 5'-triphosphate + 5'-deoxyadenosine + L-methionine + A + H(+). Its pathway is cofactor biosynthesis; molybdopterin biosynthesis. In terms of biological role, catalyzes the cyclization of GTP to (8S)-3',8-cyclo-7,8-dihydroguanosine 5'-triphosphate. The chain is Probable GTP 3',8-cyclase from Aeropyrum pernix (strain ATCC 700893 / DSM 11879 / JCM 9820 / NBRC 100138 / K1).